Here is a 183-residue protein sequence, read N- to C-terminus: Isopentenyl-diphosphate Delta-isomerase (183 aa).

Mn(2+) contacts are provided by His-26 and His-33. The Nudix hydrolase domain occupies 31-165 (SLHLAFSSWL…PWAFSPWMVS (135 aa)). Cys-68 is an active-site residue. A Mn(2+)-binding site is contributed by His-70. Glu-88 contacts Mg(2+). Positions 115 and 117 each coordinate Mn(2+). The active site involves Glu-117.

It belongs to the IPP isomerase type 1 family. In terms of assembly, homodimer. Mg(2+) is required as a cofactor. Mn(2+) serves as cofactor.

It is found in the cytoplasm. The catalysed reaction is isopentenyl diphosphate = dimethylallyl diphosphate. The protein operates within isoprenoid biosynthesis; dimethylallyl diphosphate biosynthesis; dimethylallyl diphosphate from isopentenyl diphosphate: step 1/1. Functionally, catalyzes the 1,3-allylic rearrangement of the homoallylic substrate isopentenyl (IPP) to its highly electrophilic allylic isomer, dimethylallyl diphosphate (DMAPP). The polypeptide is Isopentenyl-diphosphate Delta-isomerase (Enterobacter sp. (strain 638)).